A 156-amino-acid polypeptide reads, in one-letter code: Small ribosomal subunit protein uS7 (156 aa).

The protein belongs to the universal ribosomal protein uS7 family. As to quaternary structure, part of the 30S ribosomal subunit. Contacts proteins S9 and S11.

Functionally, one of the primary rRNA binding proteins, it binds directly to 16S rRNA where it nucleates assembly of the head domain of the 30S subunit. Is located at the subunit interface close to the decoding center, probably blocks exit of the E-site tRNA. This Gloeobacter violaceus (strain ATCC 29082 / PCC 7421) protein is Small ribosomal subunit protein uS7.